Reading from the N-terminus, the 410-residue chain is Cysteine desulfurase IscS (410 aa).

Residues 80-81, Asn160, Gln188, and 208-210 contribute to the pyridoxal 5'-phosphate site; these read AT and SGH. Residue Lys211 is modified to N6-(pyridoxal phosphate)lysine. Residue Thr248 coordinates pyridoxal 5'-phosphate. Cys334 serves as the catalytic Cysteine persulfide intermediate. Position 334 (Cys334) interacts with [2Fe-2S] cluster.

It belongs to the class-V pyridoxal-phosphate-dependent aminotransferase family. NifS/IscS subfamily. Homodimer. Forms a heterotetramer with IscU, interacts with other sulfur acceptors. The cofactor is pyridoxal 5'-phosphate.

The protein localises to the cytoplasm. It carries out the reaction (sulfur carrier)-H + L-cysteine = (sulfur carrier)-SH + L-alanine. It functions in the pathway cofactor biosynthesis; iron-sulfur cluster biosynthesis. Master enzyme that delivers sulfur to a number of partners involved in Fe-S cluster assembly, tRNA modification or cofactor biosynthesis. Catalyzes the removal of elemental sulfur atoms from cysteine to produce alanine. Functions as a sulfur delivery protein for Fe-S cluster synthesis onto IscU, an Fe-S scaffold assembly protein, as well as other S acceptor proteins. The protein is Cysteine desulfurase IscS of Rickettsia africae (strain ESF-5).